Consider the following 1379-residue polypeptide: MSASSTSSSSTSCPEGGEPSGSCKSSDEGESTLKKRMQQYGIASGYANSSISTLDRSQYQSLPLNGTRRVTVQFGRMKIVVPWKESDQTVGQLADAALLRYKKARGMANEDRIHVHRLECASDGGILDMDDVLEEVFDLNYDQILAITDEANGGSTTPTYSQIQKQQHHYAQPLPYARKFDGGPSTPIASAFGSVTVNHQAHRAASPYNVGFARSNSRDFAPQPTHSKERRDSVVEVSSFDQIPQSGLRVSTPKPSRQSEDVIDGKPMNQPILRSSLRTEASGSRTEEATPVKQSRVTLSPEVEKKLAEQDERKSERRKHYDKNPGRFARGSDRKSRITDALLDARDRIADQLESQNPAEETKSQMIRVKIDQGPMPGTSLVTFPPIPEKSENEKQLGIEVNAVFDESSELPGTSEPTKLSSVQIMKIEDGGRIAKDGRIRVGDCIVAIDGKPVDQMSIIRVRASISDLAAVTSRPVTLIINRSLESFLEQESSAKPIQSALQQANTQYIGHTTVVELIKSSNGFGFTVTGRETAKGERLFYIGTVKPYGVALGHLKSGDRLLEINGTPTGQWTQSEIVEKLKETMVGEKIKFLVSRVSQSAIMSTSASSENKENEETLKVVEEEKIPQKLPLPALMTPPVPKDTPALSPSGASRFEIVIPFINGSSSAGLGVSLKARVSKKSNGSKVDCGIFIKNVMHGGAAFKEGGLRVDDRIVGVEDIDLEPLDNREAQAALAKKLKEVGMISSNVRLTISRYNECNPGQISRDLSRITVDASSPSPSSRMSSHTAPDSLLPSPATRGTSSSGADSSHSRQSSASSAVPAVPARLTERDSIVSDGTSRNDESELPDSADPFNREGLGRKSLSEKRGMGAAADPQHIKLFQDIKHQRQNSAPTSSTQKRSKSQPRSSSQRNYRSPMKLVDLPTTAAASASTNSQNLDDSDMLNRRSQSMESINRPVESILRGTGQIPTGSSSKVQFMQAASPDQHPFPPGAALLRLKNEESRSRDKSRRKSMGNPFSAMRNFFGFGSKSRDASPEKTPTESVQLRSVERPKSIIDERNNGSSERAPPPLPPHQSQRRGSGGNVFVDYGEPYGLIPQYPHNTTSGYESYADSELYDRYAAHRYHPRGGPIIDEDEYIYRQQSTSGNSPINTSSYVNYGLPASNAYHVGSRIPPQTSSGSISKTSGAMRRVYPAEYDEDVAYHQQIPQQSTRYQQGSGSGRGNADYHHMFNSWFAYTGGGAVGAAPVIKSSYGSSPVRIAAASAIERGESFVVEPVSGSSASATDRRGRSTSSGAVASGSSSTGFQYAAKEKYADARSGKFNGGSTRLFIPRHGGGLSAAAFATNFGGEAYETRGGGAGGSPSQYRRRDQGPPHRFPQY.

Residues 1-23 (MSASSTSSSSTSCPEGGEPSGSC) are compositionally biased toward low complexity. Disordered regions lie at residues 1 to 32 (MSASSTSSSSTSCPEGGEPSGSCKSSDEGEST) and 208 to 335 (YNVG…SDRK). Composition is skewed to polar residues over residues 239-256 (SFDQIPQSGLRVSTPKPS) and 272-284 (ILRSSLRTEASGS). 2 stretches are compositionally biased toward basic and acidic residues: residues 302–315 (EVEKKLAEQDERKS) and 322–335 (DKNPGRFARGSDRK). 2 PDZ domains span residues 381 to 483 (LVTF…IINR) and 515 to 599 (VVEL…SRVS). Positions 606–626 (TSASSENKENEETLKVVEEEK) form a coiled coil. Residues 659–750 (VIPFINGSSS…EVGMISSNVR (92 aa)) enclose the PDZ 3 domain. Disordered regions lie at residues 767–873 (DLSR…MGAA), 887–918 (HQRQNSAPTSSTQKRSKSQPRSSSQRNYRSPM), 949–1085 (QSME…GGNV), 1273–1301 (VEPVSGSSASATDRRGRSTSSGAVASGSS), and 1350–1379 (AYETRGGGAGGSPSQYRRRDQGPPHRFPQY). 2 stretches are compositionally biased toward low complexity: residues 776 to 786 (SSPSPSSRMSS) and 798 to 826 (ATRGTSSSGADSSHSRQSSASSAVPAVPA). 2 stretches are compositionally biased toward basic and acidic residues: residues 828 to 844 (LTERDSIVSDGTSRNDE) and 854 to 869 (FNREGLGRKSLSEKRG). Low complexity predominate over residues 894 to 912 (PTSSTQKRSKSQPRSSSQR). Over residues 967–977 (QIPTGSSSKVQ) the composition is skewed to polar residues. 2 stretches are compositionally biased toward basic and acidic residues: residues 1030 to 1040 (KSRDASPEKTP) and 1048 to 1060 (SVERPKSIIDERN). Residues 1290–1301 (STSSGAVASGSS) show a composition bias toward low complexity.

The protein belongs to the PAR3 family. Required, together with pkc-3, for the localization of par-6; par-6 is involved in localizing/maintaining par-3 at the cell periphery. Interacts with par-6 and pkc-3 for localization at the periphery of anterior cortex of the embryo. As to expression, asymmetrically distributed at the periphery of the zygote and in dividing blastomeres of the germline lineage. Coexpressed with par-6; patchy expression observed at the periphery after completion of meiosis I and in meiosis II. On completion of metaphase II, expression is restricted to the anterior 85% of embryo length; this decreases to 55% in embryos between prophase and telophase of the first mitosis. During the first cleavage, expression is detected in the advancing furrow. Transiently coexpressed and colocalized asymmetrically with par-6 and pkc-3, in the developing somatic gonad, including the spermathecal precursor cells of L4 larvae.

It is found in the cytoplasm. Functionally, in cooperation with pkc-3, required for establishing cell polarity and regulating spindle orientation in the early embryo. Localization is crucial for recruiting par-6 and pkc-3 to the peripheral apical cortex and restricting par-2 to basolateral surfaces. Necessary for apicobasal and anterior-posterior asymmetries associated with cell adhesion and gastrulation during the first few cycles of embryogenesis, and also for epithelial cell polarity in the distal spermatheca. Regulates the asymmetric localization of csnk-1, ppk-1 and gpr-1/2 during the first embryonic division. The sequence is that of Partitioning defective protein 3 from Caenorhabditis elegans.